The primary structure comprises 640 residues: Zinc finger protein 549 (640 aa).

A KRAB domain is found at 27 to 140 (VTFEDIAVYF…PYTSVASGKW (114 aa)). The segment at 217–241 (FQQRRYKCEQVFNEKVHVTEHQRVH) adopts a C2H2-type 1; degenerate zinc-finger fold. Lys-223 participates in a covalent cross-link: Glycyl lysine isopeptide (Lys-Gly) (interchain with G-Cter in SUMO2). The C2H2-type 2; degenerate zinc-finger motif lies at 247–269 (YKRREYGKSLNSKYLFVEHQRTH). 13 consecutive C2H2-type zinc fingers follow at residues 275–298 (YVCNICGKSFLHKQTLVGHQQRIH), 304–326 (YVCIECGKSLSSKYSLVEHQRTH), 332–355 (YVCNVCGKSFRHKQTFVGHQQRIH), 361–383 (YVCMECGKSFIHSYDRIRHQRVH), 389–411 (YQCSECGKSFIYKQSLLDHHRIH), 417–439 (YECKECGKAFIHKKRLLEHQRIH), 445–467 (YVCIICGKSFIRSSDYMRHQRIH), 473–495 (YECSDCGKAFISKQTLLKHHKIH), 501–523 (YECSECGKGFYLEVKLLQHQRIH), 529–551 (CECNECGKVFSHQKRLLEHQKVH), 557–579 (CECSECGKCFRHRTSLIQHQKVH), 585–607 (YNCTACEKAFIYKNKLVEHQRIH), and 613–635 (YECGKCGKAFNKRYSLVRHQKVH).

It belongs to the krueppel C2H2-type zinc-finger protein family.

Its subcellular location is the nucleus. May be involved in transcriptional regulation. The sequence is that of Zinc finger protein 549 (ZNF549) from Homo sapiens (Human).